Here is a 260-residue protein sequence, read N- to C-terminus: Proteasome subunit alpha type-1 (260 aa).

Positions 231 to 260 are disordered; that stretch reads FLEGLEERPQRKPALPADEPAEKAEEPMEH. Residues 250–260 show a composition bias toward basic and acidic residues; it reads PAEKAEEPMEH.

The protein belongs to the peptidase T1A family. The 26S proteasome consists of a 20S proteasome core and two 19S regulatory subunits. The 20S proteasome core is a barrel-shaped complex made of 28 subunits that are arranged in four stacked rings. The two outer rings are each formed by seven alpha subunits, and the two inner rings are formed by seven beta subunits. The proteolytic activity is exerted by three beta-subunits PSMB5, PSMB6 and PSMB7.

Its subcellular location is the cytoplasm. The protein localises to the nucleus. Its function is as follows. Component of the 20S core proteasome complex involved in the proteolytic degradation of most intracellular proteins. This complex plays numerous essential roles within the cell by associating with different regulatory particles. Associated with two 19S regulatory particles, forms the 26S proteasome and thus participates in the ATP-dependent degradation of ubiquitinated proteins. The 26S proteasome plays a key role in the maintenance of protein homeostasis by removing misfolded or damaged proteins that could impair cellular functions, and by removing proteins whose functions are no longer required. Associated with the PA200 or PA28, the 20S proteasome mediates ubiquitin-independent protein degradation. This type of proteolysis is required in several pathways including spermatogenesis (20S-PA200 complex) or generation of a subset of MHC class I-presented antigenic peptides (20S-PA28 complex). The sequence is that of Proteasome subunit alpha type-1 (PSMA1) from Gallus gallus (Chicken).